The following is a 391-amino-acid chain: Alanine racemase, biosynthetic (391 aa).

Catalysis depends on K52, which acts as the Proton acceptor; specific for D-alanine. K52 bears the N6-(pyridoxal phosphate)lysine mark. Substrate is bound at residue R149. Y271 functions as the Proton acceptor; specific for L-alanine in the catalytic mechanism. Position 330 (M330) interacts with substrate.

Belongs to the alanine racemase family. Requires pyridoxal 5'-phosphate as cofactor.

It carries out the reaction L-alanine = D-alanine. The protein operates within amino-acid biosynthesis; D-alanine biosynthesis; D-alanine from L-alanine: step 1/1. It participates in cell wall biogenesis; peptidoglycan biosynthesis. In terms of biological role, catalyzes the interconversion of L-alanine and D-alanine. Provides the D-alanine required for cell wall biosynthesis. This Agrobacterium fabrum (strain C58 / ATCC 33970) (Agrobacterium tumefaciens (strain C58)) protein is Alanine racemase, biosynthetic (alr).